A 170-amino-acid chain; its full sequence is Transcription factor E (170 aa).

The HTH TFE/IIEalpha-type domain maps to 1–93; the sequence is MKEAYLYIVE…TWYVDDDVIR (93 aa).

Belongs to the TFE family. As to quaternary structure, monomer. Interaction with RNA polymerase subunits RpoF and RpoE is necessary for Tfe stimulatory transcription activity. Able to interact with Tbp and RNA polymerase in the absence of DNA promoter. Interacts both with the preinitiation and elongation complexes.

Functionally, transcription factor that plays a role in the activation of archaeal genes transcribed by RNA polymerase. Facilitates transcription initiation by enhancing TATA-box recognition by TATA-box-binding protein (Tbp), and transcription factor B (Tfb) and RNA polymerase recruitment. Not absolutely required for transcription in vitro, but particularly important in cases where Tbp or Tfb function is not optimal. It dynamically alters the nucleic acid-binding properties of RNA polymerases by stabilizing the initiation complex and destabilizing elongation complexes. Seems to translocate with the RNA polymerase following initiation and acts by binding to the non template strand of the transcription bubble in elongation complexes. The polypeptide is Transcription factor E (Pyrobaculum neutrophilum (strain DSM 2338 / JCM 9278 / NBRC 100436 / V24Sta) (Thermoproteus neutrophilus)).